The sequence spans 465 residues: Gamma-aminobutyric acid receptor subunit alpha-6 (465 aa).

Residues 1 to 19 (MALLIAWVCVAVSIEKALG) form the signal peptide. Over 20–243 (GQGDGGDLYS…FHLQRKMGYF (224 aa)) the chain is Extracellular. A glycan (N-linked (GlcNAc...) asparagine) is linked at N31. R84 is a binding site for 4-aminobutanoate. N-linked (GlcNAc...) asparagine glycosylation is found at N128 and N141. A 4-aminobutanoate-binding site is contributed by T147. C156 and C170 are disulfide-bonded. Residues 244–264 (MIQIYTPCIMTVILSQVSFWI) traverse the membrane as a helical segment. The Cytoplasmic portion of the chain corresponds to 265-270 (NKESVP). A helical membrane pass occupies residues 271-290 (ARTVFGITTVLTMTTLSISA). Residues 291–304 (RHSLPKVSYATAMD) lie on the Extracellular side of the membrane. The helical transmembrane segment at 305–325 (WFIAVCFAFVFSALIEFAAVN) threads the bilayer. The Cytoplasmic portion of the chain corresponds to 326–424 (YFTNLQTQRA…GTSKIDQYSR (99 aa)). Positions 392-415 (NSASQCQPVSAPPPAPPAPPPVGG) are disordered. Residues 401 to 413 (SAPPPAPPAPPPV) show a composition bias toward pro residues. A helical membrane pass occupies residues 425–445 (ILFPVAFAGFNLVYWVVYLSK). Residues 446–465 (DTMEFFEPTAMHLRNDHQSN) are Extracellular-facing.

Belongs to the ligand-gated ion channel (TC 1.A.9) family. Gamma-aminobutyric acid receptor (TC 1.A.9.5) subfamily. GABRA6 sub-subfamily. As to quaternary structure, heteropentamer, formed by a combination of alpha (GABRA1-6), beta (GABRB1-3), gamma (GABRG1-3), delta (GABRD), epsilon (GABRE), rho (GABRR1-3), pi (GABRP) and theta (GABRQ) chains, each subunit exhibiting distinct physiological and pharmacological properties. In terms of tissue distribution, expressed in brain, in cerebellar granule cells.

Its subcellular location is the postsynaptic cell membrane. It localises to the cell membrane. The catalysed reaction is chloride(in) = chloride(out). Functionally, alpha subunit of the heteropentameric ligand-gated chloride channel gated by gamma-aminobutyric acid (GABA), a major inhibitory neurotransmitter in the brain. GABA-gated chloride channels, also named GABA(A) receptors (GABAAR), consist of five subunits arranged around a central pore and contain GABA active binding site(s) located at the alpha and beta subunit interface(s). When activated by GABA, GABAARs selectively allow the flow of chloride anions across the cell membrane down their electrochemical gradient. The protein is Gamma-aminobutyric acid receptor subunit alpha-6 (GABRA6) of Gallus gallus (Chicken).